The primary structure comprises 963 residues: MLTTLIPLSQLNLPPNLQNSEQIQPLVTAEFASNFVHQTLQKQPDLLAEWLAKFPTPDDCCNYTERLAKILARVPNEEMLGRVLRQFRHRELARLSFIQSNKLATVELVFQHLSDLAESLILAARDWLFQRCCAEYGTPKNTLGETQELLILGMGKLGGRELNFSSDIDLIFTYPDIGETEGGRKSIENSKFFTRMAQRLIKVLDEITADGFVYRTDMRLRPFGDSGRLVLSFTAMEDYYQEQGRDWERYAMIKAKILGEDSQNLNHRYLKQMLRPFVYRRYLDFSAIQSLREMKEKISREVVRRNLTDNIKFGAGGIREVEFIAQTFQMIRGGRDKILQERSLLKVLPRLAELNLLTQTQVETLHNAYIFYRQIENVLQAIDDKQTQTLPTDEASQARLVFACQSYYQQDLYSEKTHWVEHSFNDWQQFMAVLSQYQQAVRQIFNEIIGEEETQANCNPVNEKLAEWKDILHYNIRLEDLSAVLKGYPKVAENDYTEIFRHFSTTFQDWVKRPIGVRGREVLRNLMPRIADSIFKGEDHLLLLPRVLNIVDKITTRTTYLELMLEKEQILPQLLALCSKSVMIAEQIARYPMLLDELMSHRGLTDVQAFEKYQSALQDYLIRIPEEDEEALIDGLRQFKQTQILRIAAADILGVLLVMKISDHLTYLAEAIINAVVNMAWKQVSQRFGVPEHLEADEKGFAVIGYGKLGGIELGYNSDLDLVFLHNAPEDSQTVGGKKEISSHQFYLKLAQKINSIFNLNTSAGVLYEVDMRLRPSGEAGLLVSTFNAYEHYQKNEAWTWESQALVRTRCVFGAENLKQAFEKIRQSTLAQPRASGQLRQEICEMRQKMYQHLSSHSAEQFHIKQDQGGITDIEFIAQYLVLAHSHQHPKMAVWSDNVRIFDSAVECGILSSEQSEQLQHCYTALRNKIHHLKLLRKDSVVDASEFTTERAFVREMWQRLLA.

Positions 1–453 (MLTTLIPLSQ…IFNEIIGEEE (453 aa)) are adenylyl removase. Residues 461–963 (VNEKLAEWKD…VREMWQRLLA (503 aa)) form an adenylyl transferase region.

It belongs to the GlnE family. Mg(2+) serves as cofactor.

It catalyses the reaction [glutamine synthetase]-O(4)-(5'-adenylyl)-L-tyrosine + phosphate = [glutamine synthetase]-L-tyrosine + ADP. The enzyme catalyses [glutamine synthetase]-L-tyrosine + ATP = [glutamine synthetase]-O(4)-(5'-adenylyl)-L-tyrosine + diphosphate. Its function is as follows. Involved in the regulation of glutamine synthetase GlnA, a key enzyme in the process to assimilate ammonia. When cellular nitrogen levels are high, the C-terminal adenylyl transferase (AT) inactivates GlnA by covalent transfer of an adenylyl group from ATP to specific tyrosine residue of GlnA, thus reducing its activity. Conversely, when nitrogen levels are low, the N-terminal adenylyl removase (AR) activates GlnA by removing the adenylyl group by phosphorolysis, increasing its activity. The regulatory region of GlnE binds the signal transduction protein PII (GlnB) which indicates the nitrogen status of the cell. This Mannheimia haemolytica (Pasteurella haemolytica) protein is Bifunctional glutamine synthetase adenylyltransferase/adenylyl-removing enzyme.